Reading from the N-terminus, the 235-residue chain is UPF0173 metal-dependent hydrolase Oant_3663 (235 aa).

It belongs to the UPF0173 family.

The sequence is that of UPF0173 metal-dependent hydrolase Oant_3663 from Brucella anthropi (strain ATCC 49188 / DSM 6882 / CCUG 24695 / JCM 21032 / LMG 3331 / NBRC 15819 / NCTC 12168 / Alc 37) (Ochrobactrum anthropi).